An 89-amino-acid chain; its full sequence is Acylphosphatase (89 aa).

An Acylphosphatase-like domain is found at 3 to 89 (RKEFLVSGRV…DTREKRFSTY (87 aa)). Active-site residues include arginine 18 and asparagine 36.

It belongs to the acylphosphatase family.

It catalyses the reaction an acyl phosphate + H2O = a carboxylate + phosphate + H(+). The chain is Acylphosphatase (acyP) from Clostridium perfringens (strain ATCC 13124 / DSM 756 / JCM 1290 / NCIMB 6125 / NCTC 8237 / Type A).